The sequence spans 90 residues: Acylphosphatase (90 aa).

An Acylphosphatase-like domain is found at 3 to 89 (ALKIRVEGIV…EGYEDFTIKY (87 aa)). Residues R18 and N36 contribute to the active site.

It belongs to the acylphosphatase family.

The catalysed reaction is an acyl phosphate + H2O = a carboxylate + phosphate + H(+). In Thermotoga maritima (strain ATCC 43589 / DSM 3109 / JCM 10099 / NBRC 100826 / MSB8), this protein is Acylphosphatase (acyP).